We begin with the raw amino-acid sequence, 274 residues long: Large ribosomal subunit protein uL2 (274 aa).

Positions 224-274 are disordered; it reads VAMNPVDHPHGGGEGRTSGGRHPVTPWGIPTKGYKTRRNKRSNKLIVQKRK. Over residues 257 to 274 the composition is skewed to basic residues; that stretch reads YKTRRNKRSNKLIVQKRK.

This sequence belongs to the universal ribosomal protein uL2 family. Part of the 50S ribosomal subunit. Forms a bridge to the 30S subunit in the 70S ribosome.

Its function is as follows. One of the primary rRNA binding proteins. Required for association of the 30S and 50S subunits to form the 70S ribosome, for tRNA binding and peptide bond formation. It has been suggested to have peptidyltransferase activity; this is somewhat controversial. Makes several contacts with the 16S rRNA in the 70S ribosome. The polypeptide is Large ribosomal subunit protein uL2 (Francisella tularensis subsp. tularensis (strain FSC 198)).